A 620-amino-acid chain; its full sequence is MSFDIAKYPTLALVDSTQELRLLPKESLPKLCDELRRYLLDSVSRSSGHFASGLGTVELTVALHYVYNTPFDQLIWDVGHQAYPHKILTGRRDKIGTIRQKGGLHPFPWRGESEYDVLSVGHSSTSISAGIGIAVTAEKEGKNRRTVCVIGDGAITAGMAFEAMNHAGDIRPDMLVVLNDNEMSISENVGALNNHLAQLLSGKLYSSLREGGKKVFSGVPPIKELLKRTEEHIKGMVVPGTLFEELGFNYIGPVDGHDVLGLITTLKNMRDLKGPQFLHIMTKKGRGYEPAEKDPITFHAVPKFDPSSGCLPKSSGGLPSYSKIFGDWLCETAAKDNKLMAITPAMREGSGMVEFSRKFPDRYFDVAIAEQHAVTFAAGLAIGGYKPIVAIYSTFLQRAYDQVLHDVAIQKLPVLFAIDRAGIVGADGQTHQGAFDLSYLRCIPEMVIMTPSDENECRQMLYTGYHYNDGPSAVRYPRGNAVGVELTPLEKLPIGKGIVKRRGEKLAILNFGTLMPDAAKVAESLNATLVDMRFVKPLDEALILEMAASHEALVTVEENAIMGGAGSGVNEVLMAHRKPVPVLNIGLPDFFIPQGTQEEMRAELGLDAAGMEAKIKAWLA.

Thiamine diphosphate-binding positions include histidine 80 and 121 to 123 (GHS). Aspartate 152 contributes to the Mg(2+) binding site. Residues 153 to 154 (GA), asparagine 181, tyrosine 288, and glutamate 370 contribute to the thiamine diphosphate site. Asparagine 181 contributes to the Mg(2+) binding site.

This sequence belongs to the transketolase family. DXPS subfamily. As to quaternary structure, homodimer. Requires Mg(2+) as cofactor. Thiamine diphosphate is required as a cofactor.

The catalysed reaction is D-glyceraldehyde 3-phosphate + pyruvate + H(+) = 1-deoxy-D-xylulose 5-phosphate + CO2. The protein operates within metabolic intermediate biosynthesis; 1-deoxy-D-xylulose 5-phosphate biosynthesis; 1-deoxy-D-xylulose 5-phosphate from D-glyceraldehyde 3-phosphate and pyruvate: step 1/1. Its function is as follows. Catalyzes the acyloin condensation reaction between C atoms 2 and 3 of pyruvate and glyceraldehyde 3-phosphate to yield 1-deoxy-D-xylulose-5-phosphate (DXP). The sequence is that of 1-deoxy-D-xylulose-5-phosphate synthase from Shigella sonnei (strain Ss046).